Reading from the N-terminus, the 123-residue chain is Small ribosomal subunit protein uS12 (123 aa).

3-methylthioaspartic acid is present on Asp-89. A disordered region spans residues 104 to 123 (TAGVKDRKQARSKYGAKRPK). The segment covering 113–123 (ARSKYGAKRPK) has biased composition (basic residues).

This sequence belongs to the universal ribosomal protein uS12 family. As to quaternary structure, part of the 30S ribosomal subunit. Contacts proteins S8 and S17. May interact with IF1 in the 30S initiation complex.

With S4 and S5 plays an important role in translational accuracy. Functionally, interacts with and stabilizes bases of the 16S rRNA that are involved in tRNA selection in the A site and with the mRNA backbone. Located at the interface of the 30S and 50S subunits, it traverses the body of the 30S subunit contacting proteins on the other side and probably holding the rRNA structure together. The combined cluster of proteins S8, S12 and S17 appears to hold together the shoulder and platform of the 30S subunit. The sequence is that of Small ribosomal subunit protein uS12 from Neisseria meningitidis serogroup C (strain 053442).